The sequence spans 195 residues: HTH-type transcriptional regulator TtmR (195 aa).

One can recognise an HTH marR-type domain in the interval 47-177 (DSQLCFAVYA…LLDNLASMRD (131 aa)). The segment at residues 93–116 (VKEIGSRLFLDSGTLTPLLKRLEA) is a DNA-binding region (H-T-H motif).

The protein localises to the cytoplasm. Functionally, formaldehyde-responsive transcription factor that modulates resistance to stress induced by formaldehyde. Impacts the expression of a number of genes encoding transcription factors and/or involved in stress response, including efgA, and which probably collectively trigger a formaldehyde-specific physiological response. Required for optimal transition to methylotrophy. Not involved in a general stress response. The chain is HTH-type transcriptional regulator TtmR from Methylorubrum extorquens (strain PA1) (Methylobacterium extorquens).